The primary structure comprises 75 residues: Pi-hexatoxin-Hi1d (75 aa).

6 disulfides stabilise this stretch: Cys-3/Cys-18, Cys-10/Cys-23, Cys-17/Cys-33, Cys-40/Cys-55, Cys-47/Cys-60, and Cys-54/Cys-71. Domain repeat units lie at residues 3–33 (CIRK…FEVC) and 40–71 (CLVK…SSVC). Residues 3–71 (CIRKWLSCVD…KRSGNKSSVC (69 aa)) form a 2 X approximate repeats with cysteine pattern C-C-CC-C-C region.

Belongs to the psalmotoxin-1 family. Double-knot toxin subfamily. In terms of tissue distribution, expressed by the venom gland.

The protein resides in the secreted. Functionally, this toxin potently and selectively inhibits ASIC1a, an isoform of the gene ASIC1. It incompletely inhibits ASIC1a activation in a pH-independent and slowly reversible manner. This toxin acts by binding to and stabilizing the closed state of the channel, thereby impeding the transition into a conducting state. This toxin may bind to the acidic pocket of ASIC1a, since mutation of a key residue of this pocket (Arg-350) abolishes the ability of the toxin to inhibit ASIC1a. In vivo, this toxin protects the brain from neuronal injury when administered up to 8 hours after stroke onset. The sequence is that of Pi-hexatoxin-Hi1d from Hadronyche infensa (Fraser island funnel-web spider).